The primary structure comprises 438 residues: L-fucose-proton symporter (438 aa).

Topologically, residues 2–26 (GNTSIQTQSYRAVDKDAGQSRSYII) are cytoplasmic. Residues 27–53 (PFALLCSLFFLWAVANNLNDILLPQFQ) traverse the membrane as a helical segment. The Periplasmic portion of the chain corresponds to 54 to 61 (QAFTLTNF). A helical membrane pass occupies residues 62-87 (QAGLIQSAFYFGYFIIPIPAGILMKK). The Cytoplasmic portion of the chain corresponds to 88-90 (LSY). The chain crosses the membrane as a helical span at residues 91–113 (KAGIITGLFLYALGAALFWPAAE). At 114–117 (IMNY) the chain is on the periplasmic side. Residues 118-144 (TLFLVGLFIIAAGLGCLETAANPFVTV) traverse the membrane as a helical segment. Over 145 to 150 (LGPESS) the chain is Cytoplasmic. The helical transmembrane segment at 151 to 178 (GHFRLNLAQTFNSFGAIIAVVFGQSLIL) threads the bilayer. Residues 179–193 (SNVPHQSQDVLDKMS) lie on the Periplasmic side of the membrane. The helical transmembrane segment at 194 to 227 (PEQLSAYKHSLVLSVQTPYMIIVAIVLLVALLIM) threads the bilayer. The Cytoplasmic segment spans residues 228–257 (LTKFPALQSDNHSDAKQGSFSASLSRLARI). A helical transmembrane segment spans residues 258–287 (RHWRWAVLAQFCYVGAQTACWSYLIRYAVE). Over 288–293 (EIPGMT) the chain is Periplasmic. The helical transmembrane segment at 294 to 319 (AGFAANYLTGTMVCFFIGRFTGTWLI) threads the bilayer. Residues 320–324 (SRFAP) lie on the Cytoplasmic side of the membrane. The helical transmembrane segment at 325-343 (HKVLAAYALIAMALCLISA) threads the bilayer. Topologically, residues 344 to 347 (FAGG) are periplasmic. A helical transmembrane segment spans residues 348–372 (HVGLIALTLCSAFMSIQYPTIFSLG). The Cytoplasmic portion of the chain corresponds to 373–379 (IKNLGQD). Residues 380-407 (TKYGSSFIVMTIIGGGIVTPVMGFVSDA) form a helical membrane-spanning segment. The Periplasmic portion of the chain corresponds to 408 to 410 (AGN). Residues 411 to 430 (IPTAELIPALCFAVIFIFAR) traverse the membrane as a helical segment. The Cytoplasmic portion of the chain corresponds to 431–438 (FRSQTATN).

The protein belongs to the major facilitator superfamily. FHS transporter (TC 2.A.1.7) family.

Its subcellular location is the cell inner membrane. It carries out the reaction L-fucose(in) + H(+)(in) = L-fucose(out) + H(+)(out). It catalyses the reaction D-arabinose(out) + H(+)(out) = D-arabinose(in) + H(+)(in). The catalysed reaction is L-galactose(out) + H(+)(out) = L-galactose(in) + H(+)(in). Mediates the uptake of L-fucose across the boundary membrane with the concomitant transport of protons into the cell (symport system). Can also transport L-galactose and D-arabinose, but at reduced rates compared with L-fucose. Is not able to transport L-rhamnose and L-arabinose. Binds D-arabinose with the highest affinity, followed by L-fucose, and then by L-galactose. This Escherichia coli (strain K12) protein is L-fucose-proton symporter (fucP).